We begin with the raw amino-acid sequence, 847 residues long: Ras GTPase-activating protein 2 (847 aa).

Over residues 1–21 (MAAAAPAAAASPEAPAVSGSA) the composition is skewed to low complexity. Positions 1–31 (MAAAAPAAAASPEAPAVSGSADPETGDEDSR) are disordered. N-acetylalanine is present on Ala2. C2 domains lie at 19-137 (GSAD…ETWF) and 148-288 (VQGK…QAWY). One can recognise a Ras-GAP domain in the interval 371 to 588 (NKLVPFITAV…TDVKKFLDEI (218 aa)). Phosphoserine is present on Ser554. Positions 603–704 (VHLKEGEMYK…WIDVLCRVSR (102 aa)) constitute a PH domain. A Btk-type zinc finger spans residues 706–742 (NHNRLSSFHPSAYLNGNWLCCQETSESTPGCKPCTAG). Zn(2+) contacts are provided by His714, Cys725, Cys726, and Cys736. The segment at 819-847 (DEPHEKYRKKRSSSAKYGSKENPIVGKIS) is disordered.

The protein localises to the cell membrane. Its function is as follows. Inhibitory regulator of the Ras-cyclic AMP pathway. Binds inositol tetrakisphosphate (IP4) and phospholipids. In Mus musculus (Mouse), this protein is Ras GTPase-activating protein 2 (Rasa2).